The chain runs to 407 residues: BMP-like protein unc-129 (407 aa).

The N-terminal stretch at 1–18 (MRRLPIVLLLSVFSIANC) is a signal peptide. N27, N42, and N211 each carry an N-linked (GlcNAc...) asparagine glycan. The disordered stretch occupies residues 252-283 (DDREPIKRKNGKKNSLSEEISSEDVWQGFGEE). An N-linked (GlcNAc...) asparagine glycan is attached at N395.

Belongs to the TGF-beta family. In terms of assembly, interacts with netrin receptor unc-5; the interaction is direct.

The protein resides in the secreted. It localises to the extracellular space. Its function is as follows. Required for the migration of axonal growth-cones and distal tip cells (DTC) along the dorsal-ventral axis of the body wall. Acts cell nonautonomously and independently of the classical daf-4, sma-6 or daf-1 TGFbeta receptor signaling. During axon migration, facilitates long-range repulsive guidance of unc-6/netrin by enhancing unc-5-unc-40 signaling at the expense of unc-5 alone signaling, probably through direct interaction with receptor unc-5. Involved in cell-cell contact formation in sensory rays in the developing male tail, via a pathway involving plx-2 and mab-20/semaphorin-2A. The sequence is that of BMP-like protein unc-129 from Caenorhabditis elegans.